Here is a 403-residue protein sequence, read N- to C-terminus: Argininosuccinate synthase (403 aa).

ATP contacts are provided by residues 13–21 (AYSGGLDTS) and A40. Residues Y91 and S96 each coordinate L-citrulline. G121 contacts ATP. L-aspartate contacts are provided by T123, N127, and D128. Position 127 (N127) interacts with L-citrulline. R131, S180, S189, E265, and Y277 together coordinate L-citrulline.

Belongs to the argininosuccinate synthase family. Type 1 subfamily. In terms of assembly, homotetramer.

The protein resides in the cytoplasm. The enzyme catalyses L-citrulline + L-aspartate + ATP = 2-(N(omega)-L-arginino)succinate + AMP + diphosphate + H(+). The protein operates within amino-acid biosynthesis; L-arginine biosynthesis; L-arginine from L-ornithine and carbamoyl phosphate: step 2/3. The protein is Argininosuccinate synthase of Leptospira interrogans serogroup Icterohaemorrhagiae serovar Lai (strain 56601).